A 425-amino-acid chain; its full sequence is Lysosome-associated membrane glycoprotein 2 (425 aa).

The signal sequence occupies residues Met1–Ala27. Residues Val28 to Asp192 form a first lumenal domain region. Over Val28–Asn389 the chain is Lumenal. 20 N-linked (GlcNAc...) asparagine glycosylation sites follow: Asn37, Asn56, Asn62, Asn74, Asn100, Asn105, Asn120, Asn163, Asn170, Asn179, Asn206, Asn232, Asn239, Asn252, Asn276, Asn287, Asn298, Asn312, Asn320, and Asn331. An intrachain disulfide couples Cys40 to Cys78. Residues Cys153 and Cys189 are joined by a disulfide bond. Positions Thr193–Gly238 are hinge. The second lumenal domain stretch occupies residues Asn239–Phe390. Cys242 and Cys274 are disulfide-bonded. The cysteines at positions 345 and 382 are disulfide-linked. The helical transmembrane segment at Phe390–Gly414 threads the bilayer. Over Arg415–Val425 the chain is Cytoplasmic. The important for binding and subsequent lysosomal degradation of target proteins stretch occupies residues Arg416–Arg419.

This sequence belongs to the LAMP family. Monomer. Forms large homooligomers. In terms of processing, extensively N-glycosylated. Contains a minor proportion of O-linked glycans.

It is found in the lysosome membrane. The protein localises to the endosome membrane. Its subcellular location is the cell membrane. It localises to the cytoplasmic vesicle. The protein resides in the autophagosome membrane. Its function is as follows. Lysosomal membrane glycoprotein which plays an important role in lysosome biogenesis, lysosomal pH regulation and autophagy. Plays an important role in chaperone-mediated autophagy, a process that mediates lysosomal degradation of proteins in response to various stresses and as part of the normal turnover of proteins with a long biological half-live. In the chaperone-mediated autophagy, acts downstream of chaperones, such as HSPA8/HSC70, which recognize and bind substrate proteins and mediate their recruitment to lysosomes, where target proteins bind LAMP2. Plays a role in lysosomal protein degradation in response to starvation. Required for the fusion of autophagosomes with lysosomes during autophagy. The chain is Lysosome-associated membrane glycoprotein 2 (LAMP2) from Gallus gallus (Chicken).